Here is a 281-residue protein sequence, read N- to C-terminus: Transformer-2 protein homolog alpha (281 aa).

A disordered region spans residues 1–116; the sequence is MSDVEENNFE…TGSRANPDPN (116 aa). Ser2 is modified (N-acetylserine). Phosphoserine is present on residues Ser2 and Ser14. Thr24 carries the post-translational modification Phosphothreonine. Over residues 51 to 82 the composition is skewed to basic residues; it reads RSRSKSRSRSRRHSHRRYTRSRSHSHRRRSRS. Phosphoserine is present on residues Ser80, Ser82, and Ser84. Phosphothreonine is present on Thr86. Positions 90–108 are enriched in basic residues; sequence RRRRSRSHSPMSNRRRHTG. Phosphoserine occurs at positions 94 and 96. Residues 117-195 form the RRM domain; that stretch reads TCLGVFGLSL…RRIRVDYSIT (79 aa). Lys196 is covalently cross-linked (Glycyl lysine isopeptide (Lys-Gly) (interchain with G-Cter in SUMO2)). The segment at 196 to 223 is linker; sequence KRAHTPTPGIYMGRPTHSGGGGGGGGGG. Residues 199–281 are disordered; it reads HTPTPGIYMG…RSRSYSPRRY (83 aa). Phosphothreonine is present on residues Thr200 and Thr202. Gly residues predominate over residues 213–231; sequence SGGGGGGGGGGGGGGGGGG. Arg233 carries the post-translational modification Omega-N-methylarginine. Basic and acidic residues predominate over residues 233–257; that stretch reads RRRDSYYDRGYDRGYDRYEDYDYRR. Position 237 is a phosphoserine (Ser237). The segment covering 267–281 has biased composition (basic residues); it reads YRSRSRSRSYSPRRY.

The protein belongs to the splicing factor SR family. As to quaternary structure, binds to A3 enhancer proteins SRp75, SRp55, SRp40 and SRp30. Interacts with ILDR1 (via C-terminus) and ILDR2. Phosphorylated in the RS domains. As to expression, expressed in inner ear.

Its subcellular location is the nucleus. Its function is as follows. Sequence-specific RNA-binding protein which participates in the control of pre-mRNA splicing. In Mus musculus (Mouse), this protein is Transformer-2 protein homolog alpha.